We begin with the raw amino-acid sequence, 270 residues long: Small ribosomal subunit protein uS2 (270 aa).

This sequence belongs to the universal ribosomal protein uS2 family. In terms of assembly, component of the small ribosomal subunit. Mature ribosomes consist of a small (40S) and a large (60S) subunit. The 40S subunit contains about 33 different proteins and 1 molecule of RNA (18S). The 60S subunit contains about 49 different proteins and 3 molecules of RNA (28S, 5.8S and 5S). Interacts with oho23B/rpS21.

It is found in the cytoplasm. Its subcellular location is the nucleus. In terms of biological role, required for the assembly and/or stability of the 40S ribosomal subunit. Required for the processing of the 20S rRNA-precursor to mature 18S rRNA in a late step of the maturation of 40S ribosomal subunits. Required during oogenesis and imaginal development. This is Small ribosomal subunit protein uS2 from Drosophila persimilis (Fruit fly).